Consider the following 339-residue polypeptide: uncharacterized protein (339 aa).

NADP(+) is bound by residues Ile-54, Lys-78, Asp-101, Asn-128, Tyr-213, and Lys-217. Tyr-213 serves as the catalytic Proton donor. Lys-217 (lowers pKa of active site Tyr) is an active-site residue.

This sequence belongs to the short-chain dehydrogenases/reductases (SDR) family.

This is an uncharacterized protein from Schizosaccharomyces pombe (strain 972 / ATCC 24843) (Fission yeast).